The chain runs to 301 residues: Acetylglutamate kinase (301 aa).

Residues 68-69 (GG), Arg90, and Asn195 contribute to the substrate site.

It belongs to the acetylglutamate kinase family. ArgB subfamily.

The protein localises to the cytoplasm. It catalyses the reaction N-acetyl-L-glutamate + ATP = N-acetyl-L-glutamyl 5-phosphate + ADP. The protein operates within amino-acid biosynthesis; L-arginine biosynthesis; N(2)-acetyl-L-ornithine from L-glutamate: step 2/4. Its function is as follows. Catalyzes the ATP-dependent phosphorylation of N-acetyl-L-glutamate. This is Acetylglutamate kinase from Pseudomonas putida (strain ATCC 700007 / DSM 6899 / JCM 31910 / BCRC 17059 / LMG 24140 / F1).